Reading from the N-terminus, the 294-residue chain is MINKPNQFVNHLSALKKHFASYKELREAFNDYHKHNGDELTTFFLHQFDKVMELVKQKDFKTAQSRCEEELAAPYLPKPLVSFFQSLLQLVNHDLLEQQNAALASLPAAKIIELVLQDYPNKLNMIHYLLPKTKAFVKPHLLQRLQFVLTDSELLELKRFSFFQALNQIPGFQGEQVEYFNSKLKQKFTLTLGEFEIAQQPDAKAYFEQLITQIQQLFLKEPVNAEFANEIIDAFLVSYFPLHPPVPLAQLAAKIYEYVSQIVLNEAVNLKDELIKLIVHTLYEQLDRPVGDEN.

This is an uncharacterized protein from Mycoplasma pneumoniae (strain ATCC 29342 / M129 / Subtype 1) (Mycoplasmoides pneumoniae).